Here is a 492-residue protein sequence, read N- to C-terminus: Probable cobyric acid synthase (492 aa).

Positions 252-444 constitute a GATase cobBQ-type domain; it reads PIEVNIVKFS…FHGILENFEF (193 aa). The active-site Nucleophile is C330. The active site involves H436.

It belongs to the CobB/CobQ family. CobQ subfamily.

The protein operates within cofactor biosynthesis; adenosylcobalamin biosynthesis. Catalyzes amidations at positions B, D, E, and G on adenosylcobyrinic A,C-diamide. NH(2) groups are provided by glutamine, and one molecule of ATP is hydrogenolyzed for each amidation. This Methanococcus maripaludis (strain C6 / ATCC BAA-1332) protein is Probable cobyric acid synthase.